We begin with the raw amino-acid sequence, 603 residues long: 65-kDa microtubule-associated protein 7 (603 aa).

Coiled coils occupy residues 48-79 (KECL…EAEI), 131-186 (DIKA…EKSD), and 468-502 (RLVS…LLIK). The segment at 501-559 (IKRRESIYGSKPSPRRSNSVRKTNGYNGDASVPPTPRRNSAGATNNDIMTTPRSYSSHR) is disordered. S513 carries the post-translational modification Phosphoserine. Polar residues-rich tracts occupy residues 515–526 (RRSNSVRKTNGY) and 537–559 (RRNS…SSHR). Position 599 is a phosphoserine (S599).

It belongs to the MAP65/ASE1 family. Forms dimer. Binds to microtubules (MT).

The protein localises to the nucleus. It is found in the cytoplasm. It localises to the cytoskeleton. Its subcellular location is the spindle pole. The sequence is that of 65-kDa microtubule-associated protein 7 (MAP65-7) from Arabidopsis thaliana (Mouse-ear cress).